The following is a 263-amino-acid chain: Proenkephalin-A (263 aa).

Positions 1 to 24 (MARFLGLCTWLLALGPGLLATVRA) are cleaved as a signal peptide. 3 disulfide bridges follow: cysteine 26-cysteine 48, cysteine 30-cysteine 52, and cysteine 33-cysteine 65. 2 propeptides span residues 192-203 (SPHLEDETKELQ) and 213-223 (VGRPEWWMDYQ). At serine 247 the chain carries Phosphoserine.

The protein belongs to the opioid neuropeptide precursor family. Post-translationally, proenkephalin-A is cleaved by CTSL to generate Met-enkephalin. Processed and degraded by ACE. In terms of processing, probably cleaved by ACE. Post-translationally, processed by ACE to generate Met-enkephalin in the nucleus accumbens of the brain. The N-terminal domain contains 6 conserved cysteines thought to be involved in disulfide bonding and/or processing. In terms of tissue distribution, secreted by neuroendocrine chromaffin cells through cromaffin granules.

The protein resides in the cytoplasmic vesicle. It localises to the secretory vesicle. The protein localises to the chromaffin granule lumen. It is found in the secreted. Functionally, neuropeptide that competes with and mimic the effects of opiate drugs. They play a role in a number of physiologic functions, including pain perception and responses to stress. Its function is as follows. Met-enkephalin-Arg-Phe neuropeptide acts as a strong ligand of Mu-type opioid receptor OPRM1. Met-enkephalin-Arg-Phe-binding to OPRM1 in the nucleus accumbens of the brain increases activation of OPRM1, leading to long-term synaptic depression of glutamate release. In terms of biological role, increases glutamate release in the striatum and decreases GABA concentration in the striatum. Increases glutamate release in the striatum. Functionally, enkelytin possesses antibacterial activity against Gram-positive bacteria such as Micrococcus luteus and Bacillus megaterium. This chain is Proenkephalin-A (PENK), found in Bos taurus (Bovine).